Reading from the N-terminus, the 237-residue chain is Phosphoribosylaminoimidazole-succinocarboxamide synthase (237 aa).

This sequence belongs to the SAICAR synthetase family.

It carries out the reaction 5-amino-1-(5-phospho-D-ribosyl)imidazole-4-carboxylate + L-aspartate + ATP = (2S)-2-[5-amino-1-(5-phospho-beta-D-ribosyl)imidazole-4-carboxamido]succinate + ADP + phosphate + 2 H(+). Its pathway is purine metabolism; IMP biosynthesis via de novo pathway; 5-amino-1-(5-phospho-D-ribosyl)imidazole-4-carboxamide from 5-amino-1-(5-phospho-D-ribosyl)imidazole-4-carboxylate: step 1/2. The chain is Phosphoribosylaminoimidazole-succinocarboxamide synthase from Alteromonas mediterranea (strain DSM 17117 / CIP 110805 / LMG 28347 / Deep ecotype).